The following is a 334-amino-acid chain: Ferrochelatase (334 aa).

Residues His207 and Glu288 each coordinate Fe cation.

It belongs to the ferrochelatase family.

It localises to the cytoplasm. The catalysed reaction is heme b + 2 H(+) = protoporphyrin IX + Fe(2+). Its pathway is porphyrin-containing compound metabolism; protoheme biosynthesis; protoheme from protoporphyrin-IX: step 1/1. Functionally, catalyzes the ferrous insertion into protoporphyrin IX. In Helicobacter pylori (strain P12), this protein is Ferrochelatase.